Reading from the N-terminus, the 186-residue chain is dCTP deaminase (186 aa).

A dCTP-binding site is contributed by 107–112 (KSTYAR). Glu133 functions as the Proton donor/acceptor in the catalytic mechanism. DCTP-binding residues include Gln152, Tyr166, and Gln176.

It belongs to the dCTP deaminase family. Homotrimer.

It carries out the reaction dCTP + H2O + H(+) = dUTP + NH4(+). The protein operates within pyrimidine metabolism; dUMP biosynthesis; dUMP from dCTP (dUTP route): step 1/2. Catalyzes the deamination of dCTP to dUTP. The protein is dCTP deaminase of Campylobacter concisus (strain 13826).